Consider the following 611-residue polypeptide: Depudecin biosynthesis cluster-specific transcription activator DEP6 (611 aa).

Positions 17 to 44 (CEICRQRKVRCDRALPRCRRCERLNQAC) form a DNA-binding region, zn(2)-C6 fungal-type. The tract at residues 76 to 125 (DAPRGPASSMSSQSRSDSAAPAASRVPSVSASVPNSAATNPMDMVGTRSS) is disordered. Over residues 78-113 (PRGPASSMSSQSRSDSAAPAASRVPSVSASVPNSAA) the composition is skewed to low complexity.

It localises to the nucleus. Transcription factor that positively regulates the expression of the gene cluster that mediates the biosynthesis of depudecin, a highly oxidized eleven-carbon linear polyketide that acts as a histone deacetylase (HDAC) inhibitor and makes a small contribution to pathogenesis. In Fusarium langsethiae, this protein is Depudecin biosynthesis cluster-specific transcription activator DEP6.